We begin with the raw amino-acid sequence, 896 residues long: MLKYISYSEKRKIKLRGIKMSADTPLMQQYKKIKEEYQNEILMFRLGDFYEMFFEDAKIASKELGLTLTKRNREKGQDVPLAGVPYHSVASYIAKLVEKGYSVAICDQVEDPKSATGIVKREVTRVITPGTIIDVDFLDKNNNNYIACIKINTTENIVAIAYTDITTGEFSVFEIKGKNFFEKALAEMNKIQASEILLDEKTYSEYIEILKEKISFLGVKFTEVPNVRKAESYLTSYFDIMSIEVFSLKSKDLAISTSANLLHYIDELQKGNELPFSKIEYKNIDNIMELNISTQNNLNLVPKRNEEAKGTLLGVLDNCVTSVGSRELKKIIKNPFLDIEKIKQRQFYVDYFYNDVLLRENIREYLKDIYDVERIAGKIIYGTENGKDLLSLKESIRKSLETYKVLKEHQEIKDILDIDVKILLDIYNKIELIINIEAPFSVREGGIIKDGYNSELDKLRKISKLGKDFILEIEQRERERTGIKGLKIKYNKVFGYFIEVTKANEHLVPEDYIRKQTLVNSERYIVPDLKEYEEKVITAKSKIEALEYELFKQLTSEIKGHIDSLYKLANRIANLDIVSNFAHIATKNSYVKPEIGDGDILEIKGGRHPIVESLIPSGTYVKNDIILDDKNNLIILTGPNMSGKSTYMKQVALNIIMAHIGSYVAADCAKIPIVDKIFTRVGASDDLLTGQSTFMLEMTEVASILNNATNKSFIVLDEIGRGTSTYDGISIATAITEYIHNNIGAKTIFATHYHELTELEKELERAINFRVEVKEDGKNVVFLREIVKGGADKSYGIEVARLSGVPKEVLNRSNKILKKLETRKNLIENKIKAEQMILFGNGFEEENEEEETEILSENESKVLELLKNMDLNSLSPLESLLKLNELKKILIGGTDE.

Residue 638–645 participates in ATP binding; the sequence is GPNMSGKS.

The protein belongs to the DNA mismatch repair MutS family.

Functionally, this protein is involved in the repair of mismatches in DNA. It is possible that it carries out the mismatch recognition step. This protein has a weak ATPase activity. The sequence is that of DNA mismatch repair protein MutS from Fusobacterium nucleatum subsp. nucleatum (strain ATCC 25586 / DSM 15643 / BCRC 10681 / CIP 101130 / JCM 8532 / KCTC 2640 / LMG 13131 / VPI 4355).